Reading from the N-terminus, the 57-residue chain is Large ribosomal subunit protein bL32 (57 aa).

This sequence belongs to the bacterial ribosomal protein bL32 family.

This chain is Large ribosomal subunit protein bL32, found in Staphylococcus haemolyticus (strain JCSC1435).